Consider the following 222-residue polypeptide: DNA mismatch repair protein MutH (222 aa).

Belongs to the MutH family.

It is found in the cytoplasm. In terms of biological role, sequence-specific endonuclease that cleaves unmethylated GATC sequences. It is involved in DNA mismatch repair. This Pasteurella multocida (strain Pm70) protein is DNA mismatch repair protein MutH.